The chain runs to 588 residues: Sentrin-specific protease 2 (588 aa).

The Nuclear localization signal motif lies at 28 to 31; that stretch reads KRRR. S32 is subject to Phosphoserine. The short motif at 47–52 is the Nuclear localization signal element; sequence PAKRPR. An axin-binding region spans residues 72–381; that stretch reads GFPFQLTTKP…EKEISNALGH (310 aa). Residues 157-184 are disordered; that stretch reads EGYNRRPSGRRHSKSNPESSLPWKPQEQ. The Nuclear export signal signature appears at 316–331; that stretch reads LEPDLSEEVSARLRLG. Phosphoserine occurs at positions 332 and 343. Residues 394–558 are protease; that stretch reads LRITRGDIQT…MFTCKYADYI (165 aa). Catalysis depends on residues H477 and D494. C547 serves as the catalytic Nucleophile.

Belongs to the peptidase C48 family. As to quaternary structure, binds to SUMO2 and SUMO3. Interacts with the C-terminal domain of NUP153 via its N-terminus. Interacts with MTA1. Binds to AXIN1. In terms of processing, polyubiquitinated; which leads to proteasomal degradation. In terms of tissue distribution, ubiquitous. Highly expressed in brain, lung and testis.

It localises to the nucleus. The protein resides in the nuclear pore complex. Its subcellular location is the nucleus membrane. It is found in the cytoplasm. Its function is as follows. Protease that catalyzes two essential functions in the SUMO pathway. The first is the hydrolysis of an alpha-linked peptide bond at the C-terminal end of the small ubiquitin-like modifier (SUMO) propeptides, SUMO1, SUMO2 and SUMO3 leading to the mature form of the proteins. The second is the deconjugation of SUMO1, SUMO2 and SUMO3 from targeted proteins, by cleaving an epsilon-linked peptide bond between the C-terminal glycine of the mature SUMO and the lysine epsilon-amino group of the target protein. May down-regulate CTNNB1 levels and thereby modulate the Wnt pathway. Deconjugates SUMO2 from MTA1. Plays a dynamic role in adipogenesis by desumoylating and promoting the stabilization of CEBPB. Acts as a regulator of the cGAS-STING pathway by catalyzing desumoylation of CGAS and STING1 during the late phase of viral infection. This chain is Sentrin-specific protease 2 (Senp2), found in Rattus norvegicus (Rat).